The primary structure comprises 298 residues: GTP cyclohydrolase FolE2 (298 aa).

It belongs to the GTP cyclohydrolase IV family.

It catalyses the reaction GTP + H2O = 7,8-dihydroneopterin 3'-triphosphate + formate + H(+). It functions in the pathway cofactor biosynthesis; 7,8-dihydroneopterin triphosphate biosynthesis; 7,8-dihydroneopterin triphosphate from GTP: step 1/1. Functionally, converts GTP to 7,8-dihydroneopterin triphosphate. The chain is GTP cyclohydrolase FolE2 from Xylella fastidiosa (strain 9a5c).